Reading from the N-terminus, the 439-residue chain is 23S rRNA (uracil(1939)-C(5))-methyltransferase RlmD (439 aa).

The region spanning 10-69 is the TRAM domain; it reads KTQLNTRHQAVQVERLDHHGAGIAYLKKKPLFIDGALPGEEVVTQLVEEKSKFARGKLIK. Residues C82, C88, C91, and C169 each contribute to the [4Fe-4S] cluster site. S-adenosyl-L-methionine is bound by residues Q272, F301, N306, E322, N349, and D370. The active-site Nucleophile is C396.

Belongs to the class I-like SAM-binding methyltransferase superfamily. RNA M5U methyltransferase family. RlmD subfamily.

It catalyses the reaction uridine(1939) in 23S rRNA + S-adenosyl-L-methionine = 5-methyluridine(1939) in 23S rRNA + S-adenosyl-L-homocysteine + H(+). In terms of biological role, catalyzes the formation of 5-methyl-uridine at position 1939 (m5U1939) in 23S rRNA. This Vibrio campbellii (strain ATCC BAA-1116) protein is 23S rRNA (uracil(1939)-C(5))-methyltransferase RlmD.